A 432-amino-acid chain; its full sequence is Golgin subfamily A member 6-like protein 9 (432 aa).

Residues 1 to 11 (MWPQPRLPPHP) are compositionally biased toward pro residues. Disordered regions lie at residues 1-77 (MWPQ…YGEG) and 349-411 (KELE…AGGA). Residues 51 to 62 (NGSSPDTFTSGG) are compositionally biased toward polar residues. Residues 157-354 (SKMEQLQDET…EQQVKELEKS (198 aa)) are a coiled coil. Positions 349–362 (KELEKSGGAEEPRG) are enriched in basic and acidic residues. Residues 366–381 (AAAARPVAGAPVPQGA) show a composition bias toward low complexity.

It belongs to the GOLGA6 family.

This is Golgin subfamily A member 6-like protein 9 from Homo sapiens (Human).